A 370-amino-acid polypeptide reads, in one-letter code: Proto-oncogene Wnt-1 (370 aa).

Residues 1–27 (MGLWALLPGWVSATLLLALAALPAALA) form the signal peptide. N29 carries N-linked (GlcNAc...) asparagine glycosylation. Intrachain disulfides connect C93/C104, C143/C151, C153/C170, C218/C232, C220/C227, C299/C330, C315/C325, C329/C369, C345/C360, C347/C357, and C352/C353. S224 is lipidated: O-palmitoleoyl serine; by PORCN. N316 and N346 each carry an N-linked (GlcNAc...) asparagine glycan. N359 carries an N-linked (GlcNAc...) asparagine glycan.

This sequence belongs to the Wnt family. In terms of assembly, forms a soluble 1:1 complex with AFM; this prevents oligomerization and is required for prolonged biological activity. The complex with AFM may represent the physiological form in body fluids. Interacts with PORCN. Interacts with RSPO1, RSPO2 and RSPO3. Interacts with WLS. Post-translationally, palmitoleoylation is required for efficient binding to frizzled receptors. Palmitoleoylation is necessary for proper trafficking to cell surface. Depalmitoleoylated by NOTUM, leading to inhibit Wnt signaling pathway.

Its subcellular location is the secreted. The protein localises to the extracellular space. It localises to the extracellular matrix. In terms of biological role, ligand for members of the frizzled family of seven transmembrane receptors. Acts in the canonical Wnt signaling pathway by promoting beta-catenin-dependent transcriptional activation. In some developmental processes, is also a ligand for the coreceptor RYK, thus triggering Wnt signaling. Plays an essential role in the development of the embryonic brain and central nervous system (CNS). Has a role in osteoblast function, bone development and bone homeostasis. The sequence is that of Proto-oncogene Wnt-1 (WNT1) from Homo sapiens (Human).